A 182-amino-acid polypeptide reads, in one-letter code: CDP-diacylglycerol--glycerol-3-phosphate 3-phosphatidyltransferase (182 aa).

Residues 2 to 12 (QFNIPTLLTLF) are Cytoplasmic-facing. The chain crosses the membrane as a helical span at residues 13-37 (RVILIPFLVVVFYLPFAWAPMVSAL). The Periplasmic portion of the chain corresponds to 38-60 (IFCIAAITDWFDGFLARRWNQST). A helical membrane pass occupies residues 61-81 (RFGAFLDPVADKVLVAIAMVL). Residues 82–86 (VTEHY) are Cytoplasmic-facing. The chain crosses the membrane as a helical span at residues 87-107 (HSWWVTLPAATMIAREIIISA). Residues 108 to 145 (LREWMAELGKRSSVAVSWIGKVKTTAQMVALAWLLWRP) lie on the Periplasmic side of the membrane. Residues 146–168 (NIWVEYAGIALFFVAAVLTLWSM) traverse the membrane as a helical segment. Topologically, residues 169–181 (LQYLSAARGDLLD) are cytoplasmic.

This sequence belongs to the CDP-alcohol phosphatidyltransferase class-I family.

It is found in the cell inner membrane. The enzyme catalyses a CDP-1,2-diacyl-sn-glycerol + sn-glycerol 3-phosphate = a 1,2-diacyl-sn-glycero-3-phospho-(1'-sn-glycero-3'-phosphate) + CMP + H(+). It participates in phospholipid metabolism; phosphatidylglycerol biosynthesis; phosphatidylglycerol from CDP-diacylglycerol: step 1/2. Its function is as follows. Catalyzes the conversion of cytidine diphosphate diacylglycerol (CDP-DG) and glycerol 3-phosphate into phosphatidylglycerol. Essential for the synthesis of anionic phospholipids, thereby playing a role in balancing the ratio of zwitterionic and anionic phospholipids, which is thought to be important for normal membrane function. This chain is CDP-diacylglycerol--glycerol-3-phosphate 3-phosphatidyltransferase, found in Salmonella choleraesuis (strain SC-B67).